We begin with the raw amino-acid sequence, 89 residues long: Small ribosomal subunit protein uS17 (89 aa).

The protein belongs to the universal ribosomal protein uS17 family. As to quaternary structure, part of the 30S ribosomal subunit.

In terms of biological role, one of the primary rRNA binding proteins, it binds specifically to the 5'-end of 16S ribosomal RNA. This Stenotrophomonas maltophilia (strain K279a) protein is Small ribosomal subunit protein uS17.